Reading from the N-terminus, the 288-residue chain is 33 kDa chaperonin (288 aa).

Disulfide bonds link cysteine 236-cysteine 238 and cysteine 269-cysteine 272.

This sequence belongs to the HSP33 family. Under oxidizing conditions two disulfide bonds are formed involving the reactive cysteines. Under reducing conditions zinc is bound to the reactive cysteines and the protein is inactive.

The protein resides in the cytoplasm. Its function is as follows. Redox regulated molecular chaperone. Protects both thermally unfolding and oxidatively damaged proteins from irreversible aggregation. Plays an important role in the bacterial defense system toward oxidative stress. This Lactococcus lactis subsp. lactis (strain IL1403) (Streptococcus lactis) protein is 33 kDa chaperonin.